A 472-amino-acid polypeptide reads, in one-letter code: Excisase A (472 aa).

One can recognise a Tyr recombinase domain in the interval 244 to 429 (EILSGITKFE…FSLDMRKLAI (186 aa)). Active-site residues include R287, K317, R384, and H407. The O-(3'-phospho-DNA)-tyrosine intermediate role is filled by Y416.

It belongs to the XisA/XisC recombinase family.

Functionally, essential for DNA excision. Site specific recombinase necessary for the excision of the 11 kb nifD element during heterocyst differentiation. This Nostoc sp. (strain PCC 7120 / SAG 25.82 / UTEX 2576) protein is Excisase A (xisA).